We begin with the raw amino-acid sequence, 206 residues long: Histidine biosynthesis bifunctional protein HisIE (206 aa).

The interval 1 to 117 (MGSNEVATGD…SCFPSAPGQF (117 aa)) is phosphoribosyl-AMP cyclohydrolase. The phosphoribosyl-ATP pyrophosphohydrolase stretch occupies residues 118–206 (LGSLDALVAE…AAALLESRHQ (89 aa)).

This sequence in the N-terminal section; belongs to the PRA-CH family. It in the C-terminal section; belongs to the PRA-PH family.

The protein resides in the cytoplasm. It catalyses the reaction 1-(5-phospho-beta-D-ribosyl)-ATP + H2O = 1-(5-phospho-beta-D-ribosyl)-5'-AMP + diphosphate + H(+). The enzyme catalyses 1-(5-phospho-beta-D-ribosyl)-5'-AMP + H2O = 1-(5-phospho-beta-D-ribosyl)-5-[(5-phospho-beta-D-ribosylamino)methylideneamino]imidazole-4-carboxamide. It functions in the pathway amino-acid biosynthesis; L-histidine biosynthesis; L-histidine from 5-phospho-alpha-D-ribose 1-diphosphate: step 2/9. The protein operates within amino-acid biosynthesis; L-histidine biosynthesis; L-histidine from 5-phospho-alpha-D-ribose 1-diphosphate: step 3/9. The polypeptide is Histidine biosynthesis bifunctional protein HisIE (Xanthomonas axonopodis pv. citri (strain 306)).